A 387-amino-acid chain; its full sequence is Cobalt-precorrin-5B C(1)-methyltransferase (387 aa).

The protein belongs to the CbiD family.

The enzyme catalyses Co-precorrin-5B + S-adenosyl-L-methionine = Co-precorrin-6A + S-adenosyl-L-homocysteine. The protein operates within cofactor biosynthesis; adenosylcobalamin biosynthesis; cob(II)yrinate a,c-diamide from sirohydrochlorin (anaerobic route): step 6/10. Catalyzes the methylation of C-1 in cobalt-precorrin-5B to form cobalt-precorrin-6A. In Desulfitobacterium hafniense (strain Y51), this protein is Cobalt-precorrin-5B C(1)-methyltransferase.